A 695-amino-acid chain; its full sequence is Elongation factor G (695 aa).

A tr-type G domain is found at 10 to 285 (DKTRNIGIMA…GVVDYLPSPL (276 aa)). GTP is bound by residues 19–26 (AHIDAGKT), 83–87 (DTPGH), and 137–140 (NKMD).

Belongs to the TRAFAC class translation factor GTPase superfamily. Classic translation factor GTPase family. EF-G/EF-2 subfamily.

Its subcellular location is the cytoplasm. Functionally, catalyzes the GTP-dependent ribosomal translocation step during translation elongation. During this step, the ribosome changes from the pre-translocational (PRE) to the post-translocational (POST) state as the newly formed A-site-bound peptidyl-tRNA and P-site-bound deacylated tRNA move to the P and E sites, respectively. Catalyzes the coordinated movement of the two tRNA molecules, the mRNA and conformational changes in the ribosome. The polypeptide is Elongation factor G (Latilactobacillus sakei subsp. sakei (strain 23K) (Lactobacillus sakei subsp. sakei)).